An 810-amino-acid polypeptide reads, in one-letter code: DNA gyrase subunit A (810 aa).

The Topo IIA-type catalytic domain maps to 36–502 (LPDVRDGLKP…EVLKTSMSDL (467 aa)). The O-(5'-phospho-DNA)-tyrosine intermediate role is filled by Tyr124. The C-terminal domain stretch occupies residues 499–810 (MSDLMQKENI…SLVSVSKFIK (312 aa)). The short motif at 529–535 (QGTGGKG) is the GyrA-box element.

Belongs to the type II topoisomerase GyrA/ParC subunit family. Heterotetramer, composed of two GyrA and two GyrB chains. In the heterotetramer, GyrA contains the active site tyrosine that forms a transient covalent intermediate with DNA, while GyrB binds cofactors and catalyzes ATP hydrolysis.

The protein resides in the cytoplasm. It catalyses the reaction ATP-dependent breakage, passage and rejoining of double-stranded DNA.. Its function is as follows. A type II topoisomerase that negatively supercoils closed circular double-stranded (ds) DNA in an ATP-dependent manner to modulate DNA topology and maintain chromosomes in an underwound state. Negative supercoiling favors strand separation, and DNA replication, transcription, recombination and repair, all of which involve strand separation. Also able to catalyze the interconversion of other topological isomers of dsDNA rings, including catenanes and knotted rings. Type II topoisomerases break and join 2 DNA strands simultaneously in an ATP-dependent manner. This chain is DNA gyrase subunit A, found in Borreliella burgdorferi (strain ATCC 35210 / DSM 4680 / CIP 102532 / B31) (Borrelia burgdorferi).